The sequence spans 131 residues: Small ribosomal subunit protein uS8 (131 aa).

Belongs to the universal ribosomal protein uS8 family. In terms of assembly, part of the 30S ribosomal subunit. Contacts proteins S5 and S12.

Functionally, one of the primary rRNA binding proteins, it binds directly to 16S rRNA central domain where it helps coordinate assembly of the platform of the 30S subunit. This is Small ribosomal subunit protein uS8 from Parabacteroides distasonis (strain ATCC 8503 / DSM 20701 / CIP 104284 / JCM 5825 / NCTC 11152).